The chain runs to 256 residues: Sugar fermentation stimulation protein homolog (256 aa).

A compositionally biased stretch (low complexity) spans 128 to 141 (TGSTDTSFSGTPPT). A disordered region spans residues 128–149 (TGSTDTSFSGTPPTNTEPANTK).

Belongs to the SfsA family.

This Shewanella sediminis (strain HAW-EB3) protein is Sugar fermentation stimulation protein homolog.